The primary structure comprises 78 residues: DNA-directed RNA polymerase subunit Rpo5 (78 aa).

It belongs to the archaeal Rpo5/eukaryotic RPB5 RNA polymerase subunit family. As to quaternary structure, part of the RNA polymerase complex.

The protein localises to the cytoplasm. The catalysed reaction is RNA(n) + a ribonucleoside 5'-triphosphate = RNA(n+1) + diphosphate. DNA-dependent RNA polymerase (RNAP) catalyzes the transcription of DNA into RNA using the four ribonucleoside triphosphates as substrates. The chain is DNA-directed RNA polymerase subunit Rpo5 from Methanococcus vannielii (strain ATCC 35089 / DSM 1224 / JCM 13029 / OCM 148 / SB).